A 567-amino-acid polypeptide reads, in one-letter code: Zinc finger protein 512 (567 aa).

A disordered region spans residues 1 to 34 (MSSRLGAVPATPGPTPFKQQRSTRIVGAKNSRTQ). Glycyl lysine isopeptide (Lys-Gly) (interchain with G-Cter in SUMO2) cross-links involve residues K18 and K84. The disordered stretch occupies residues 87-148 (AASHVEGPGG…QTRRIRKEPP (62 aa)). The segment covering 119-130 (KKHKLYGRKQRP) has biased composition (basic residues). The segment at 197–220 (FTCHHCGKQLRSLAGMKYHVMANH) adopts a C2H2-type 1 zinc-finger fold. K227 participates in a covalent cross-link: Glycyl lysine isopeptide (Lys-Gly) (interchain with G-Cter in SUMO2). The C2H2-type 2 zinc-finger motif lies at 287–310 (LKCHHCGKPYRSKAGLAYHLRSEH). K333 is covalently cross-linked (Glycyl lysine isopeptide (Lys-Gly) (interchain with G-Cter in SUMO2)). Residues 406-430 (IQCPNQGCEAVYSSVSGLKAHLGSC) form a C2H2-type 3; atypical zinc finger. The C2H2-type 3 zinc finger occupies 440–463 (YKCLLCQKEFVSESGVKYHINSVH). A compositionally biased stretch (basic and acidic residues) spans 485-494 (KQRQQEEEKR). Residues 485–567 (KQRQQEEEKR…PKTNHKRGKK (83 aa)) form a disordered region. The span at 495 to 508 (RQQHRSRRSLRRRQ) shows a compositional bias: basic residues. A compositionally biased stretch (basic and acidic residues) spans 523–544 (VGKDQRRNHEELLVATSRKEPE). The segment covering 556–567 (RSPKTNHKRGKK) has biased composition (basic residues).

Belongs to the krueppel C2H2-type zinc-finger protein family.

It localises to the nucleus. In terms of biological role, may be involved in transcriptional regulation. The protein is Zinc finger protein 512 (ZNF512) of Bos taurus (Bovine).